A 274-amino-acid polypeptide reads, in one-letter code: Diaminopimelate epimerase (274 aa).

Substrate-binding residues include Asn-11 and Asn-76. Cys-85 serves as the catalytic Proton donor. Substrate contacts are provided by residues 86–87, Asn-157, Asn-189, and 207–208; these read GN and ER. Residue Cys-216 is the Proton acceptor of the active site. 217–218 contributes to the substrate binding site; the sequence is GT.

The protein belongs to the diaminopimelate epimerase family. In terms of assembly, homodimer.

It localises to the cytoplasm. It catalyses the reaction (2S,6S)-2,6-diaminopimelate = meso-2,6-diaminopimelate. Its pathway is amino-acid biosynthesis; L-lysine biosynthesis via DAP pathway; DL-2,6-diaminopimelate from LL-2,6-diaminopimelate: step 1/1. Its function is as follows. Catalyzes the stereoinversion of LL-2,6-diaminopimelate (L,L-DAP) to meso-diaminopimelate (meso-DAP), a precursor of L-lysine and an essential component of the bacterial peptidoglycan. The chain is Diaminopimelate epimerase from Thermobifida fusca (strain YX).